The following is a 172-amino-acid chain: Keratin-associated protein 13-1 (172 aa).

Tandem repeats lie at residues 46 to 55 (CQLGSSLYRG), 56 to 65 (CQQTCWEPTS), 66 to 75 (CQTSYVESSP), 76 to 85 (CQTSCYRPRT), and 92 to 101 (CQTTYSGSLG). The segment at 46 to 101 (CQLGSSLYRGCQQTCWEPTSCQTSYVESSPCQTSCYRPRTSLLCSPCQTTYSGSLG) is 5 X 10 AA approximate repeats.

This sequence belongs to the PMG family. As to quaternary structure, interacts with hair keratins. As to expression, weak expression seen in the late matrix and entire cortex area of the hair follicle.

Functionally, in the hair cortex, hair keratin intermediate filaments are embedded in an interfilamentous matrix, consisting of hair keratin-associated proteins (KRTAP), which are essential for the formation of a rigid and resistant hair shaft through their extensive disulfide bond cross-linking with abundant cysteine residues of hair keratins. The matrix proteins include the high-sulfur and high-glycine-tyrosine keratins. This Homo sapiens (Human) protein is Keratin-associated protein 13-1 (KRTAP13-1).